The following is a 139-amino-acid chain: D-ribose pyranase (139 aa).

H20 (proton donor) is an active-site residue. Residues D28, H106, and 128–130 (YAN) each bind substrate.

This sequence belongs to the RbsD / FucU family. RbsD subfamily. As to quaternary structure, homodecamer.

It localises to the cytoplasm. It carries out the reaction beta-D-ribopyranose = beta-D-ribofuranose. Its pathway is carbohydrate metabolism; D-ribose degradation; D-ribose 5-phosphate from beta-D-ribopyranose: step 1/2. In terms of biological role, catalyzes the interconversion of beta-pyran and beta-furan forms of D-ribose. The protein is D-ribose pyranase of Histophilus somni (strain 2336) (Haemophilus somnus).